Consider the following 288-residue polypeptide: Bifunctional protein FolD (288 aa).

NADP(+)-binding positions include 166–168 and isoleucine 232; that span reads GAS.

It belongs to the tetrahydrofolate dehydrogenase/cyclohydrolase family. As to quaternary structure, homodimer.

It catalyses the reaction (6R)-5,10-methylene-5,6,7,8-tetrahydrofolate + NADP(+) = (6R)-5,10-methenyltetrahydrofolate + NADPH. The catalysed reaction is (6R)-5,10-methenyltetrahydrofolate + H2O = (6R)-10-formyltetrahydrofolate + H(+). Its pathway is one-carbon metabolism; tetrahydrofolate interconversion. Its function is as follows. Catalyzes the oxidation of 5,10-methylenetetrahydrofolate to 5,10-methenyltetrahydrofolate and then the hydrolysis of 5,10-methenyltetrahydrofolate to 10-formyltetrahydrofolate. The polypeptide is Bifunctional protein FolD (Salmonella enteritidis PT4 (strain P125109)).